An 818-amino-acid chain; its full sequence is Serine/threonine-protein phosphatase 4 regulatory subunit 3 (818 aa).

Residues M1–V100 form the WH1 domain. Acidic residues predominate over residues F670–E681. Positions F670–S818 are disordered. Positions F703–L718 are enriched in basic and acidic residues. Residues S729–A775 show a composition bias toward low complexity. Phosphoserine is present on residues S769 and S770. Over residues Y788–S803 the composition is skewed to acidic residues.

The protein belongs to the SMEK family. Serine/threonine-protein phosphatase 4 (PP4) occurs in different assemblies of the catalytic and one or more regulatory subunits.

Regulatory subunit of serine/threonine-protein phosphatase 4. In Danio rerio (Zebrafish), this protein is Serine/threonine-protein phosphatase 4 regulatory subunit 3 (smek1).